Here is a 158-residue protein sequence, read N- to C-terminus: Transcription factor BTF3 homolog 4 (158 aa).

An N6-methyllysine modification is found at Lys-5. The region spanning 33 to 98 (TADDKKLQSS…AEAKPITEML (66 aa)) is the NAC-A/B domain. The residue at position 111 (Thr-111) is a Phosphothreonine. The disordered stretch occupies residues 122 to 158 (RQVLDSKAPKPEDIDEEDDDVPDLVENFDEASKNEAN). Acidic residues predominate over residues 134–150 (DIDEEDDDVPDLVENFD).

Belongs to the NAC-beta family.

This Homo sapiens (Human) protein is Transcription factor BTF3 homolog 4 (BTF3L4).